We begin with the raw amino-acid sequence, 58 residues long: Light-harvesting protein B-875 alpha chain (58 aa).

The Cytoplasmic portion of the chain corresponds to 1–15 (MSKFYKIWMIFDPRR). Residues 16 to 36 (VFVAQGVFLFLLAVMIHLILL) form a helical membrane-spanning segment. H32 provides a ligand contact to a bacteriochlorophyll. Residues 37 to 58 (STPSYNWLEISAAKYNRVAVAE) lie on the Periplasmic side of the membrane.

It belongs to the antenna complex alpha subunit family. As to quaternary structure, the core complex is formed by different alpha and beta chains, binding bacteriochlorophyll molecules, and arranged most probably in tetrameric structures disposed around the reaction center. The non-pigmented gamma chains may constitute additional components.

It localises to the cell inner membrane. Antenna complexes are light-harvesting systems, which transfer the excitation energy to the reaction centers. The protein is Light-harvesting protein B-875 alpha chain (pufA) of Cereibacter sphaeroides (strain ATCC 17023 / DSM 158 / JCM 6121 / CCUG 31486 / LMG 2827 / NBRC 12203 / NCIMB 8253 / ATH 2.4.1.) (Rhodobacter sphaeroides).